We begin with the raw amino-acid sequence, 287 residues long: Phosphoribosylaminoimidazole-succinocarboxamide synthase (287 aa).

It belongs to the SAICAR synthetase family.

It catalyses the reaction 5-amino-1-(5-phospho-D-ribosyl)imidazole-4-carboxylate + L-aspartate + ATP = (2S)-2-[5-amino-1-(5-phospho-beta-D-ribosyl)imidazole-4-carboxamido]succinate + ADP + phosphate + 2 H(+). It participates in purine metabolism; IMP biosynthesis via de novo pathway; 5-amino-1-(5-phospho-D-ribosyl)imidazole-4-carboxamide from 5-amino-1-(5-phospho-D-ribosyl)imidazole-4-carboxylate: step 1/2. The chain is Phosphoribosylaminoimidazole-succinocarboxamide synthase from Neisseria meningitidis serogroup B (strain ATCC BAA-335 / MC58).